The sequence spans 1226 residues: Polyamine-transporting ATPase 13A3 (1226 aa).

Residues Met-1 to Lys-28 are Cytoplasmic-facing. The stretch at Leu-29–Trp-49 is an intramembrane region. Topologically, residues Met-50–Lys-205 are cytoplasmic. Ser-98 is modified (phosphoserine). Residues Leu-206–Trp-226 form a helical membrane-spanning segment. Over Ser-227–Tyr-232 the chain is Lumenal. A helical transmembrane segment spans residues Tyr-233–Ile-253. The Cytoplasmic portion of the chain corresponds to Arg-254–Asp-409. Residues Ala-410–Ile-430 traverse the membrane as a helical segment. Residues Asn-431 to Asp-448 are Lumenal-facing. Residues Ile-449–Ala-469 form a helical membrane-spanning segment. Residues Gln-470 to Lys-940 are Cytoplasmic-facing. The active-site 4-aspartylphosphate intermediate is Asp-498. Asp-498 and Thr-500 together coordinate Mg(2+). ATP-binding positions include Asp-498–Thr-500, Phe-628, Arg-684, and Asp-750. Position 817 is a phosphoserine (Ser-817). Asp-883 is a binding site for Mg(2+). Asp-883–Asp-887 contributes to the ATP binding site. Residues Phe-941 to Ser-961 form a helical membrane-spanning segment. A topological domain (lumenal) is located at residue Asn-962. A helical transmembrane segment spans residues Leu-963–Met-983. The Cytoplasmic segment spans residues Ser-984–Ser-999. A helical membrane pass occupies residues Gly-1000–Phe-1020. Over Gln-1021–Asn-1073 the chain is Lumenal. Residues Thr-1074–Gly-1094 traverse the membrane as a helical segment. At Lys-1095–Tyr-1105 the chain is on the cytoplasmic side. A helical transmembrane segment spans residues Phe-1106–Val-1126. Residues Ala-1127–Arg-1143 are Lumenal-facing. A helical membrane pass occupies residues Val-1144–Val-1164. Over Asp-1165–Thr-1226 the chain is Cytoplasmic.

Belongs to the cation transport ATPase (P-type) (TC 3.A.3) family. Type V subfamily.

It is found in the recycling endosome membrane. It localises to the early endosome membrane. Its subcellular location is the late endosome membrane. The enzyme catalyses putrescine(out) + ATP + H2O = putrescine(in) + ADP + phosphate + H(+). Its function is as follows. ATP-driven pump involved in endocytosis-dependent polyamine transport. Uses ATP as an energy source to transfer polyamine precursor putrescine from the endosomal compartment to the cytosol. In Macaca fascicularis (Crab-eating macaque), this protein is Polyamine-transporting ATPase 13A3 (ATP13A3).